Reading from the N-terminus, the 109-residue chain is MTRWALVVFMVLMLDRVPGTPIPTFQLLPQNYPETTPSSVSSESPSDTTTGPSASWSNSKASPYLDTRVILSLDVPIGLLRILLEQARNKAARNQAATNAQILARVGRR.

Residues 1-22 form the signal peptide; it reads MTRWALVVFMVLMLDRVPGTPI. Residues 23 to 67 constitute a propeptide that is removed on maturation; it reads PTFQLLPQNYPETTPSSVSSESPSDTTTGPSASWSNSKASPYLDT. The segment at 24 to 60 is disordered; sequence TFQLLPQNYPETTPSSVSSESPSDTTTGPSASWSNSK. Low complexity predominate over residues 33–50; that stretch reads PETTPSSVSSESPSDTTT. Over residues 51-60 the composition is skewed to polar residues; that stretch reads GPSASWSNSK. Position 106 is a valine amide; partial (valine 106).

The protein belongs to the sauvagine/corticotropin-releasing factor/urotensin I family. In terms of assembly, binds with high affinity to CRF receptors 2-alpha and 2-beta. In terms of processing, glycosylated.

Its subcellular location is the secreted. Functionally, suppresses food intake, delays gastric emptying and decreases heat-induced edema. Might represent an endogenous ligand for maintaining homeostasis after stress. The chain is Urocortin-2 (Ucn2) from Rattus norvegicus (Rat).